A 301-amino-acid polypeptide reads, in one-letter code: Chitin deacetylase 1 (301 aa).

A signal peptide spans 1-24 (MKIFNTIQSVLFAAFFLKQGNCLA). N-linked (GlcNAc...) asparagine glycans are attached at residues asparagine 26, asparagine 50, and asparagine 68. Cysteine 107 and cysteine 290 are oxidised to a cystine. The NodB homology domain occupies 108 to 288 (FKLSQTFDDG…LIGSDQLTIA (181 aa)). The active-site Proton acceptor is the aspartate 115. Aspartate 115 is a binding site for acetate. Positions 116, 162, and 166 each coordinate Co(2+). Residue asparagine 189 is glycosylated (N-linked (GlcNAc...) asparagine). Tyrosine 203 provides a ligand contact to acetate. The active-site Proton donor is the histidine 263.

The protein belongs to the polysaccharide deacetylase family. Co(2+) is required as a cofactor.

It localises to the prospore. The catalysed reaction is [(1-&gt;4)-N-acetyl-beta-D-glucosaminyl](n) + n H2O = chitosan + n acetate. Functionally, hydrolyzes the N-acetamido groups of N-acetyl-D-glucosamine residues in chitin to form chitosan and acetate. Chitosan is a component of the spore wall. The protein is Chitin deacetylase 1 of Saccharomyces cerevisiae (strain ATCC 204508 / S288c) (Baker's yeast).